The sequence spans 517 residues: Ribose import ATP-binding protein RbsA 1 (517 aa).

2 consecutive ABC transporter domains span residues 11-251 (LEMR…VGRD) and 263-507 (YDPG…ALAT). 43 to 50 (GENGAGKS) provides a ligand contact to ATP.

This sequence belongs to the ABC transporter superfamily. Ribose importer (TC 3.A.1.2.1) family. The complex is composed of an ATP-binding protein (RbsA), two transmembrane proteins (RbsC) and a solute-binding protein (RbsB).

The protein localises to the cell inner membrane. The catalysed reaction is D-ribose(out) + ATP + H2O = D-ribose(in) + ADP + phosphate + H(+). Functionally, part of the ABC transporter complex RbsABC involved in ribose import. Responsible for energy coupling to the transport system. This chain is Ribose import ATP-binding protein RbsA 1, found in Burkholderia cenocepacia (strain HI2424).